Consider the following 225-residue polypeptide: 3-dehydroquinate dehydratase (225 aa).

Residues 30–32 (EWR) and Arg62 contribute to the 3-dehydroquinate site. His118 functions as the Proton donor/acceptor in the catalytic mechanism. The active-site Schiff-base intermediate with substrate is the Lys143. Residues Arg186, Ser205, and Gln209 each coordinate 3-dehydroquinate.

It belongs to the type-I 3-dehydroquinase family. Homodimer.

It carries out the reaction 3-dehydroquinate = 3-dehydroshikimate + H2O. It functions in the pathway metabolic intermediate biosynthesis; chorismate biosynthesis; chorismate from D-erythrose 4-phosphate and phosphoenolpyruvate: step 3/7. Functionally, involved in the third step of the chorismate pathway, which leads to the biosynthesis of aromatic amino acids. Catalyzes the cis-dehydration of 3-dehydroquinate (DHQ) and introduces the first double bond of the aromatic ring to yield 3-dehydroshikimate. The sequence is that of 3-dehydroquinate dehydratase from Streptococcus thermophilus (strain ATCC BAA-491 / LMD-9).